An 831-amino-acid chain; its full sequence is Probable DNA-directed RNA polymerase (831 aa).

Residues Asp490, Lys560, and Asp738 contribute to the active site.

This sequence belongs to the phage and mitochondrial RNA polymerase family.

Its subcellular location is the mitochondrion. The catalysed reaction is RNA(n) + a ribonucleoside 5'-triphosphate = RNA(n+1) + diphosphate. Functionally, DNA-dependent RNA polymerase catalyzes the transcription of DNA into RNA using the four ribonucleoside triphosphates as substrates. This is Probable DNA-directed RNA polymerase from Gelasinospora sp. (strain G114).